The chain runs to 337 residues: Probable dual-specificity RNA methyltransferase RlmN (337 aa).

Glutamate 88 serves as the catalytic Proton acceptor. The 229-residue stretch at 94–322 (SSDRLTVCVS…ASIRRSRGLD (229 aa)) folds into the Radical SAM core domain. Cysteines 101 and 327 form a disulfide. 3 residues coordinate [4Fe-4S] cluster: cysteine 108, cysteine 112, and cysteine 115. Residues 155–156 (GE), serine 185, 208–210 (SLH), and asparagine 284 each bind S-adenosyl-L-methionine. Cysteine 327 (S-methylcysteine intermediate) is an active-site residue.

It belongs to the radical SAM superfamily. RlmN family. [4Fe-4S] cluster is required as a cofactor.

Its subcellular location is the cytoplasm. It carries out the reaction adenosine(2503) in 23S rRNA + 2 reduced [2Fe-2S]-[ferredoxin] + 2 S-adenosyl-L-methionine = 2-methyladenosine(2503) in 23S rRNA + 5'-deoxyadenosine + L-methionine + 2 oxidized [2Fe-2S]-[ferredoxin] + S-adenosyl-L-homocysteine. The enzyme catalyses adenosine(37) in tRNA + 2 reduced [2Fe-2S]-[ferredoxin] + 2 S-adenosyl-L-methionine = 2-methyladenosine(37) in tRNA + 5'-deoxyadenosine + L-methionine + 2 oxidized [2Fe-2S]-[ferredoxin] + S-adenosyl-L-homocysteine. Its function is as follows. Specifically methylates position 2 of adenine 2503 in 23S rRNA and position 2 of adenine 37 in tRNAs. The polypeptide is Probable dual-specificity RNA methyltransferase RlmN (Thermosynechococcus vestitus (strain NIES-2133 / IAM M-273 / BP-1)).